The chain runs to 268 residues: Nickel import ATP-binding protein NikE (268 aa).

The region spanning 4-252 (LNVSDLSHHY…SSDAGRVLQN (249 aa)) is the ABC transporter domain. 45 to 52 (GRSGCGKS) contacts ATP.

The protein belongs to the ABC transporter superfamily. Nickel importer (TC 3.A.1.5.3) family. In terms of assembly, the complex is composed of two ATP-binding proteins (NikD and NikE), two transmembrane proteins (NikB and NikC) and a solute-binding protein (NikA).

The protein resides in the cell inner membrane. It carries out the reaction Ni(2+)(out) + ATP + H2O = Ni(2+)(in) + ADP + phosphate + H(+). In terms of biological role, part of the ABC transporter complex NikABCDE involved in nickel import. Responsible for energy coupling to the transport system. The polypeptide is Nickel import ATP-binding protein NikE (Escherichia coli O157:H7).